Reading from the N-terminus, the 193-residue chain is Potassium-transporting ATPase KdpC subunit (193 aa).

Residues 14 to 34 form a helical membrane-spanning segment; it reads ITFTFLVLCGLVYPLIVTGIA.

This sequence belongs to the KdpC family. The system is composed of three essential subunits: KdpA, KdpB and KdpC.

The protein localises to the cell membrane. Its function is as follows. Part of the high-affinity ATP-driven potassium transport (or Kdp) system, which catalyzes the hydrolysis of ATP coupled with the electrogenic transport of potassium into the cytoplasm. This subunit acts as a catalytic chaperone that increases the ATP-binding affinity of the ATP-hydrolyzing subunit KdpB by the formation of a transient KdpB/KdpC/ATP ternary complex. The protein is Potassium-transporting ATPase KdpC subunit of Bacillus cereus (strain Q1).